The sequence spans 708 residues: Fatty acid oxidation complex subunit alpha (708 aa).

The interval 1-191 is enoyl-CoA hydratase; it reads MDNNNAFQLS…KLGVVDACVP (191 aa). Residues 311 to 708 are 3-hydroxyacyl-CoA dehydrogenase; sequence APVAAVGVLG…RAGLGEKFYP (398 aa).

The protein in the N-terminal section; belongs to the enoyl-CoA hydratase/isomerase family. It in the central section; belongs to the 3-hydroxyacyl-CoA dehydrogenase family. As to quaternary structure, heterotetramer of two alpha chains (FadJ) and two beta chains (FadI).

It is found in the cytoplasm. The catalysed reaction is a (3S)-3-hydroxyacyl-CoA = a (2E)-enoyl-CoA + H2O. It catalyses the reaction a 4-saturated-(3S)-3-hydroxyacyl-CoA = a (3E)-enoyl-CoA + H2O. It carries out the reaction a (3S)-3-hydroxyacyl-CoA + NAD(+) = a 3-oxoacyl-CoA + NADH + H(+). The enzyme catalyses (3S)-3-hydroxybutanoyl-CoA = (3R)-3-hydroxybutanoyl-CoA. The protein operates within lipid metabolism; fatty acid beta-oxidation. Its function is as follows. Catalyzes the formation of a hydroxyacyl-CoA by addition of water on enoyl-CoA. Also exhibits 3-hydroxyacyl-CoA epimerase and 3-hydroxyacyl-CoA dehydrogenase activities. The chain is Fatty acid oxidation complex subunit alpha from Vibrio cholerae serotype O1 (strain ATCC 39315 / El Tor Inaba N16961).